We begin with the raw amino-acid sequence, 403 residues long: Protein Bel-2 (403 aa).

The protein belongs to the spumavirus protein Bel-2 family.

In Homo sapiens (Human), this protein is Protein Bel-2 (bel2).